We begin with the raw amino-acid sequence, 884 residues long: Protein argonaute-4 (884 aa).

The PAZ domain maps to 242–361 (PVIEFMCEVL…LPLEVCNIVA (120 aa)). Positions 532–843 (LIVVILPGKT…VAFRARYHLV (312 aa)) constitute a Piwi domain. The tract at residues 848–870 (DSAEGSHVSGQSNGRDPQALAKA) is disordered.

It belongs to the argonaute family. Ago subfamily.

The protein localises to the cytoplasm. It localises to the P-body. In terms of biological role, required for RNA-mediated gene silencing (RNAi). Binds to short RNAs such as microRNAs (miRNAs) and represses the translation of mRNAs which are complementary to them. Lacks endonuclease activity and does not appear to cleave target mRNAs. The sequence is that of Protein argonaute-4 (ago4) from Xenopus laevis (African clawed frog).